A 122-amino-acid polypeptide reads, in one-letter code: Large ribosomal subunit protein uL14 (122 aa).

The protein belongs to the universal ribosomal protein uL14 family. In terms of assembly, part of the 50S ribosomal subunit. Forms a cluster with proteins L3 and L19. In the 70S ribosome, L14 and L19 interact and together make contacts with the 16S rRNA in bridges B5 and B8.

In terms of biological role, binds to 23S rRNA. Forms part of two intersubunit bridges in the 70S ribosome. In Paraburkholderia phytofirmans (strain DSM 17436 / LMG 22146 / PsJN) (Burkholderia phytofirmans), this protein is Large ribosomal subunit protein uL14.